The sequence spans 63 residues: U2-agatoxin-Ao1v (63 aa).

The signal sequence occupies residues 1–14 (LLLISAMVGSMIAA). A propeptide spanning residues 15-28 (VPEEESLQLSEDER) is cleaved from the precursor. 3 disulfide bridges follow: Cys-31–Cys-47, Cys-38–Cys-52, and Cys-46–Cys-62.

The protein belongs to the neurotoxin 01 (U2-agtx) family. As to expression, expressed by the venom gland.

The protein resides in the secreted. Functionally, insect active toxin causing rapid but reversible paralysis in crickets. No activity shown in mammals. Does not show effect on mammalian voltage-gated calcium channels. In Agelena orientalis (Funnel-web spider), this protein is U2-agatoxin-Ao1v.